The primary structure comprises 375 residues: tRNA-specific 2-thiouridylase MnmA (375 aa).

Residues 12–19 (GMSGGVDS) and Met38 each bind ATP. Residues 98–100 (NPD) form an interaction with target base in tRNA region. Residue Cys103 is the Nucleophile of the active site. Cys103 and Cys200 are oxidised to a cystine. Gly127 contributes to the ATP binding site. An interaction with tRNA region spans residues 150–152 (KDQ). The Cysteine persulfide intermediate role is filled by Cys200. The interaction with tRNA stretch occupies residues 312–313 (RY).

The protein belongs to the MnmA/TRMU family.

It is found in the cytoplasm. It catalyses the reaction S-sulfanyl-L-cysteinyl-[protein] + uridine(34) in tRNA + AH2 + ATP = 2-thiouridine(34) in tRNA + L-cysteinyl-[protein] + A + AMP + diphosphate + H(+). Functionally, catalyzes the 2-thiolation of uridine at the wobble position (U34) of tRNA, leading to the formation of s(2)U34. The protein is tRNA-specific 2-thiouridylase MnmA of Ligilactobacillus salivarius (strain UCC118) (Lactobacillus salivarius).